The primary structure comprises 577 residues: DEAD-box ATP-dependent RNA helicase 22 (577 aa).

The Q motif signature appears at 82–110 (TSWESLGVSDRLASALHGAGLARPSLVQA). Positions 113-375 (IPHVLTTNDV…GGVLKRMFPN (263 aa)) constitute a Helicase ATP-binding domain. 126-133 (AETGSGKT) is an ATP binding site. A DEAD box motif is present at residues 249–252 (DEAD). Positions 288–317 (SLGDTNEYREDSDSQSAELSADDEENEDGL) are disordered. Residues 407–568 (LLDAVKYGLK…SFRNKLKKQA (162 aa)) form the Helicase C-terminal domain.

The protein belongs to the DEAD box helicase family.

It catalyses the reaction ATP + H2O = ADP + phosphate + H(+). In Oryza sativa subsp. japonica (Rice), this protein is DEAD-box ATP-dependent RNA helicase 22.